We begin with the raw amino-acid sequence, 334 residues long: Probable quinone oxidoreductase (334 aa).

Belongs to the zinc-containing alcohol dehydrogenase family. Quinone oxidoreductase subfamily.

The catalysed reaction is 2 a quinone + NADPH + H(+) = 2 a 1,4-benzosemiquinone + NADP(+). This chain is Probable quinone oxidoreductase (ZTA1), found in Saccharomyces cerevisiae (strain ATCC 204508 / S288c) (Baker's yeast).